Here is a 124-residue protein sequence, read N- to C-terminus: Small ribosomal subunit protein uS12 (124 aa).

Residue D89 is modified to 3-methylthioaspartic acid.

It belongs to the universal ribosomal protein uS12 family. As to quaternary structure, part of the 30S ribosomal subunit. Contacts proteins S8 and S17. May interact with IF1 in the 30S initiation complex.

In terms of biological role, with S4 and S5 plays an important role in translational accuracy. Its function is as follows. Interacts with and stabilizes bases of the 16S rRNA that are involved in tRNA selection in the A site and with the mRNA backbone. Located at the interface of the 30S and 50S subunits, it traverses the body of the 30S subunit contacting proteins on the other side and probably holding the rRNA structure together. The combined cluster of proteins S8, S12 and S17 appears to hold together the shoulder and platform of the 30S subunit. This Prochlorococcus marinus (strain SARG / CCMP1375 / SS120) protein is Small ribosomal subunit protein uS12.